Here is a 740-residue protein sequence, read N- to C-terminus: MAAFSEMGVMAEIAQAVEEMDWLLPTDIQAESIPLILGGGDVLMAAETGSGKTGAFSIPVIQIVYETLKDQQEGKKGKTSVKTGSTVLNKWQMNPYDRGSSFAIGSDGLCCQSREIKEWHGCRSTRGVNKGKYYYEVSCHDQGLCRVGWSTLQASLDLGTDKFGFGFGGTGKKSHNKQFDNYGEEFTMHDTIGCYIDIDNGTVKYSKNGKDLGLAFQIPAHLKNQAVFASCVLKNAELKFNFGEEDFKFPPKDGFVALSKAPDGHVVKSQNTGSAQVSQAKNLPNAPKALIIEPSRELAEQTLNNVKQFKKYVDSPKLRELLIIGGVAAKEQLTLLENGVDIVVGTPGRIDDLISTGKLNLSQVRFLVLDEADGLLSQGYSDFINRIHGQIPQVTSDGKRLQVIVCSATLHSFDVKKLSEKIMHFPTWVDLKGEDSVPETVHHVVVPVNPKKDKQWERLGKNHIRTDGVHDKDNTRPGGNSAEMWSEAIKVLKGEYTVRAIKEHKMDQAIIFCRTKLDCDNMEQYFIQQGGGPDKKGHQFSCVCLHSDRKPQERKHNLERFKKCEVRFLICTDVAARGIDIHGVPYVINVTLPDEKQNYVHRIGRVGRAERMGLAISLVAAEKEKVWYHVCSSRGKGCHNTRLKEDGGCTIWYNETQLLSEIEEHLTCTISQVEPDIKVPLDEFDGKVVYGQRRATGGGLYKGHVDILAPTVQELAALEKEAQTSFLHLGYLSNQLFRTF.

Residues 1 to 448 are interaction with dsRNA; the sequence is MAAFSEMGVM…ETVHHVVVPV (448 aa). The Helicase ATP-binding domain occupies 2 to 428; the sequence is AAFSEMGVMA…SEKIMHFPTW (427 aa). ATP is bound at residue 46–53; that stretch reads AETGSGKT. Residues 70-247 form the B30.2/SPRY domain; that stretch reads DQQEGKKGKT…LKFNFGEEDF (178 aa). A DEAD box motif is present at residues 370-373; it reads DEAD. Residues 493 to 681 enclose the Helicase C-terminal domain; it reads KGEYTVRAIK…QVEPDIKVPL (189 aa).

This sequence belongs to the DEAD box helicase family. DDX1 subfamily.

The protein localises to the nucleus. The protein resides in the cytoplasm. Its subcellular location is the cytoplasmic granule. It is found in the cytosol. It localises to the mitochondrion. It catalyses the reaction ATP + H2O = ADP + phosphate + H(+). Acts as an ATP-dependent RNA helicase, able to unwind both RNA-RNA and RNA-DNA duplexes. Possesses 5' single-stranded RNA overhang nuclease activity. Acts as a positive regulator of transcription. May be involved in 3'-end cleavage and polyadenylation of pre-mRNAs. Binds DNA and RNA. Component of the tRNA-splicing ligase complex required to facilitate the enzymatic turnover of catalytic subunit rtcb. Binds (via helicase ATP-binding domain) on both short and long poly(I:C) dsRNA. The sequence is that of ATP-dependent RNA helicase DDX1 (ddx1) from Xenopus tropicalis (Western clawed frog).